Reading from the N-terminus, the 347-residue chain is Putative coenzyme F420-dependent oxidoreductase Rv3520c (347 aa).

The sequence is that of Putative coenzyme F420-dependent oxidoreductase Rv3520c from Mycobacterium tuberculosis (strain ATCC 25618 / H37Rv).